The primary structure comprises 134 residues: Small ribosomal subunit protein uS8 (134 aa).

Belongs to the universal ribosomal protein uS8 family. In terms of assembly, part of the 30S ribosomal subunit. Contacts proteins S5 and S12.

One of the primary rRNA binding proteins, it binds directly to 16S rRNA central domain where it helps coordinate assembly of the platform of the 30S subunit. This is Small ribosomal subunit protein uS8 from Thermotoga maritima (strain ATCC 43589 / DSM 3109 / JCM 10099 / NBRC 100826 / MSB8).